The sequence spans 402 residues: MVMTQRIAVLGATGSIGDSTLAILAAQPQYYDVYALSGYHRLDKLLALCQQFAPKRVGVPTTAVDDFAKRLSAAGLDIEVVGGDAGLVDIATDSQTDTVVAAIVGAAGLPSTLAAARAGKRILLANKEALVMAGQVMINAVKTHHATLLPLDSEHNAIFQCLPFAIQQDNTQIHRSNHGVRKLWLTASGGPFLQQSFTQMQQASVAEAVKHPNWSMGQKISVDSATMMNKGLELIEACHLFDLPENKINVVIHPQSIIHSMVEYSDGSFLAQLGSPDMKTPIAHALSYPDRIDSGSQPLDLFALNGLEFIEPDLQKFACLRLAREAMQAGTHATIILNAANEIAVSAFLNNKIRLTDIADINEQALNEIQVPLLTETADIDEILAIDNLARQYTDKLVARLA.

The NADPH site is built by Thr-13, Gly-14, Ser-15, Ile-16, and Asn-126. Lys-127 lines the 1-deoxy-D-xylulose 5-phosphate pocket. An NADPH-binding site is contributed by Glu-128. Position 152 (Asp-152) interacts with Mn(2+). 1-deoxy-D-xylulose 5-phosphate contacts are provided by Ser-153, Glu-154, Ser-188, and His-211. Mn(2+) is bound at residue Glu-154. Gly-217 contacts NADPH. The 1-deoxy-D-xylulose 5-phosphate site is built by Ser-224, Asn-229, Lys-230, and Glu-233. Residue Glu-233 participates in Mn(2+) binding.

The protein belongs to the DXR family. The cofactor is Mg(2+). Mn(2+) is required as a cofactor.

It catalyses the reaction 2-C-methyl-D-erythritol 4-phosphate + NADP(+) = 1-deoxy-D-xylulose 5-phosphate + NADPH + H(+). Its pathway is isoprenoid biosynthesis; isopentenyl diphosphate biosynthesis via DXP pathway; isopentenyl diphosphate from 1-deoxy-D-xylulose 5-phosphate: step 1/6. Functionally, catalyzes the NADPH-dependent rearrangement and reduction of 1-deoxy-D-xylulose-5-phosphate (DXP) to 2-C-methyl-D-erythritol 4-phosphate (MEP). In Psychrobacter arcticus (strain DSM 17307 / VKM B-2377 / 273-4), this protein is 1-deoxy-D-xylulose 5-phosphate reductoisomerase.